The following is a 90-amino-acid chain: MKTLLLTLVLVTIMCLDLGYTIRCFITPDVTSTDCPNGHVCYTKTWCDGFCSSRGRRVELGCAATCPTVKPGVDIQCCSTDNCNPFPTRP.

Residues Met1–Thr21 form the signal peptide. 5 disulfides stabilise this stretch: Cys24–Cys41, Cys35–Cys62, Cys47–Cys51, Cys66–Cys77, and Cys78–Cys83.

Belongs to the three-finger toxin family. Long-chain subfamily. Type II alpha-neurotoxin sub-subfamily. As to expression, expressed by the venom gland.

The protein resides in the secreted. In terms of biological role, binds with high affinity to muscular (alpha-1/CHRNA1) and neuronal (alpha-7/CHRNA7) nicotinic acetylcholine receptor (nAChR) and inhibits acetylcholine from binding to the receptor, thereby impairing neuromuscular and neuronal transmission. The protein is Long neurotoxin 7 of Naja sputatrix (Malayan spitting cobra).